We begin with the raw amino-acid sequence, 51 residues long: UPF0391 membrane protein Mbur_2216 (51 aa).

Helical transmembrane passes span 1–21 and 31–51; these read MADL…AYVL and MTIA…TILL.

It belongs to the UPF0391 family.

It localises to the cell membrane. This Methanococcoides burtonii (strain DSM 6242 / NBRC 107633 / OCM 468 / ACE-M) protein is UPF0391 membrane protein Mbur_2216.